The following is a 288-amino-acid chain: Cyclin-dependent kinase 2 homolog (288 aa).

The Protein kinase domain occupies 4 to 284 (YHGLEKIGEG…AKQAIEHPYF (281 aa)). ATP contacts are provided by residues 10–18 (IGEGTYGVV) and Lys-32. The residue at position 14 (Thr-14) is a Phosphothreonine. Tyr-15 is subject to Phosphotyrosine. The Proton acceptor role is filled by Asp-125. A Phosphothreonine modification is found at Thr-158.

This sequence belongs to the protein kinase superfamily. CMGC Ser/Thr protein kinase family. CDC2/CDKX subfamily. In terms of assembly, may form a complex composed of at least the catalytic subunit CRK2 and a cyclin. It depends on Mg(2+) as a cofactor.

Its subcellular location is the cytoplasm. The enzyme catalyses L-seryl-[protein] + ATP = O-phospho-L-seryl-[protein] + ADP + H(+). The catalysed reaction is L-threonyl-[protein] + ATP = O-phospho-L-threonyl-[protein] + ADP + H(+). It catalyses the reaction [DNA-directed RNA polymerase] + ATP = phospho-[DNA-directed RNA polymerase] + ADP + H(+). Its activity is regulated as follows. Phosphorylation at Thr-14 or Tyr-15 inactivates the enzyme, while phosphorylation at Thr-158 activates it. In terms of biological role, serine/threonine-protein kinase. Involved in the control of the cell cycle. Required for entry into S-phase and mitosis. Probable component of the kinase complex that phosphorylates the repetitive C-terminus of RNA polymerase II. The sequence is that of Cyclin-dependent kinase 2 homolog from Plasmodium berghei (strain Anka).